The chain runs to 386 residues: 2-isopropylmalate synthase (386 aa).

The Pyruvate carboxyltransferase domain occupies 12 to 265; sequence VRIFDTTLRD…EVNIKTYKLY (254 aa). A divalent metal cation contacts are provided by Asp-21, His-203, His-205, and Asn-239.

Belongs to the alpha-IPM synthase/homocitrate synthase family. Homodimer. The cofactor is a divalent metal cation.

It catalyses the reaction 3-methyl-2-oxobutanoate + acetyl-CoA + H2O = (2S)-2-isopropylmalate + CoA + H(+). The protein operates within amino-acid biosynthesis; L-leucine biosynthesis; L-leucine from 3-methyl-2-oxobutanoate: step 1/4. In terms of biological role, catalyzes the condensation of the acetyl group of acetyl-CoA with 3-methyl-2-oxobutanoate (2-oxoisovalerate) to form 3-carboxy-3-hydroxy-4-methylpentanoate (2-isopropylmalate). Carries out the first step of the leucine biosynthesis pathway. This is 2-isopropylmalate synthase (leuA) from Sulfurisphaera tokodaii (strain DSM 16993 / JCM 10545 / NBRC 100140 / 7) (Sulfolobus tokodaii).